The primary structure comprises 929 residues: Dual serine/threonine and tyrosine protein kinase (929 aa).

The segment covering Met-1 to Ser-14 has biased composition (low complexity). Residues Met-1–Gly-21 form a disordered region. 2 coiled-coil regions span residues Glu-189–Ala-215 and Arg-395–Leu-431. Residues Pro-652–Leu-906 form the Protein kinase domain. Residues Leu-658–Val-666 and Lys-681 contribute to the ATP site. Asp-777 functions as the Proton acceptor in the catalytic mechanism.

The protein belongs to the protein kinase superfamily. Ser/Thr protein kinase family. In terms of tissue distribution, predominantly expressed in skeletal muscle and testis. Expressed in basolateral and apical membranes of all tubular epithelia. Expressed in thin ascending limb of the loop of Henle and the distal convoluted tubule. Expressed in all layers of transitional ureteric epithelium and in the ureteric smooth-muscle cells. Weakly expressed in heart, brain, placenta, kidney, pancreas, spleen, thymus, prostate, uterus, small intestine, white blood cells, stomach, spinal cord and adrenal gland. Is widely distributed in the CNS. Also detected in several tumor cell lines. Expressed in the skin.

The protein localises to the cytoplasm. It is found in the cell membrane. The protein resides in the apical cell membrane. Its subcellular location is the basolateral cell membrane. It localises to the cell junction. It catalyses the reaction L-seryl-[protein] + ATP = O-phospho-L-seryl-[protein] + ADP + H(+). The enzyme catalyses L-threonyl-[protein] + ATP = O-phospho-L-threonyl-[protein] + ADP + H(+). It carries out the reaction L-tyrosyl-[protein] + ATP = O-phospho-L-tyrosyl-[protein] + ADP + H(+). Functionally, acts as a positive regulator of ERK phosphorylation downstream of fibroblast growth factor-receptor activation. Involved in the regulation of both caspase-dependent apoptosis and caspase-independent cell death. In the skin, it plays a predominant role in suppressing caspase-dependent apoptosis in response to UV stress in a range of dermal cell types. The sequence is that of Dual serine/threonine and tyrosine protein kinase (DSTYK) from Homo sapiens (Human).